A 115-amino-acid chain; its full sequence is ComG operon protein 5 (115 aa).

Residues 1 to 7 constitute a propeptide, leader sequence; it reads MWRENKG. F8 carries the N-methylphenylalanine modification. A helical transmembrane segment spans residues 13–31; sequence TMSALSLWLFVLLTVVPLW.

In terms of processing, processing of ComGE in competent cells requires ComC.

It localises to the cell membrane. It is found in the cell surface. Required for transformation and DNA binding. The polypeptide is ComG operon protein 5 (comGE) (Bacillus subtilis (strain 168)).